A 491-amino-acid polypeptide reads, in one-letter code: Probable glycine dehydrogenase (decarboxylating) subunit 2 (491 aa).

An N6-(pyridoxal phosphate)lysine modification is found at K274.

Belongs to the GcvP family. C-terminal subunit subfamily. The glycine cleavage system is composed of four proteins: P, T, L and H. In this organism, the P 'protein' is a heterodimer of two subunits. The cofactor is pyridoxal 5'-phosphate.

It carries out the reaction N(6)-[(R)-lipoyl]-L-lysyl-[glycine-cleavage complex H protein] + glycine + H(+) = N(6)-[(R)-S(8)-aminomethyldihydrolipoyl]-L-lysyl-[glycine-cleavage complex H protein] + CO2. The glycine cleavage system catalyzes the degradation of glycine. The P protein binds the alpha-amino group of glycine through its pyridoxal phosphate cofactor; CO(2) is released and the remaining methylamine moiety is then transferred to the lipoamide cofactor of the H protein. The sequence is that of Probable glycine dehydrogenase (decarboxylating) subunit 2 from Shouchella clausii (strain KSM-K16) (Alkalihalobacillus clausii).